The sequence spans 840 residues: Serotype-specific mannosyltransferase WbdA (840 aa).

The alpha-(1-&gt;2)-mannosyltransferase stretch occupies residues 2 to 399; it reads HILIDVQGYQ…WANTAHLAIE (398 aa). Residues 456–829 form an alpha-(1-&gt;3)-mannosyltransferase region; that stretch reads KLLVDISVLA…WKQSAEFLLK (374 aa).

This sequence belongs to the glycosyltransferase group 1 family. Glycosyltransferase 4 subfamily. Monomer. Interacts with the C-terminal region of WbdD. Interacts with WbdD via a surface-exposed alpha-helix in the C-terminal mannosyltransferase domain. However, the C-terminal domain is unable to interact with WbdD in the absence of its N-terminal partner.

The protein resides in the cell inner membrane. It catalyses the reaction [alpha-D-Man-(1-&gt;3)-alpha-D-Man-(1-&gt;3)-alpha-D-Man-(1-&gt;2)-alpha-D-Man-(1-&gt;2)](n)-alpha-D-Man-(1-&gt;3)-alpha-D-Man-(1-&gt;3)-alpha-D-Man-(1-&gt;3)-alpha-D-GlcNAc-di-trans,octa-cis-undecaprenyl diphosphate + 2 GDP-alpha-D-mannose = alpha-D-Man-(1-&gt;2)-alpha-D-Man-(1-&gt;2)-[alpha-D-Man-(1-&gt;3)-alpha-D-Man-(1-&gt;3)-alpha-D-Man-(1-&gt;2)-alpha-D-Man-(1-&gt;2)](n)-alpha-D-Man-(1-&gt;3)-alpha-D-Man-(1-&gt;3)-alpha-D-Man-(1-&gt;3)-alpha-D-GlcNAc-di-trans,octa-cis-undecaprenyl diphosphate + 2 GDP + 2 H(+). It carries out the reaction alpha-D-Man-(1-&gt;2)-alpha-D-Man-(1-&gt;2)-[alpha-D-Man-(1-&gt;3)-alpha-D-Man-(1-&gt;3)-alpha-D-Man-(1-&gt;2)-alpha-D-Man-(1-&gt;2)](n)-alpha-D-Man-(1-&gt;3)-alpha-D-Man-(1-&gt;3)-alpha-D-Man-(1-&gt;3)-alpha-D-GlcNAc-di-trans,octa-cis-undecaprenyl diphosphate + 2 GDP-alpha-D-mannose = [alpha-D-Man-(1-&gt;3)-alpha-D-Man-(1-&gt;3)-alpha-D-Man-(1-&gt;2)-alpha-D-Man-(1-&gt;2)](n+1)-alpha-D-Man-(1-&gt;3)-alpha-D-Man-(1-&gt;3)-alpha-D-Man-(1-&gt;3)-alpha-D-GlcNAc-di-trans,octa-cis-undecaprenyl diphosphate + 2 GDP + 2 H(+). It functions in the pathway bacterial outer membrane biogenesis; LPS O-antigen biosynthesis. With respect to regulation, the alpha-(1-&gt;2)-mannosyltransferase activity of the N-terminal domain is regulated by the activity of the C-terminal alpha-(1-&gt;3)-mannosyltransferase. The relative concentration of WbdA and WbdD is critical in determining the O polysaccharide (OPS) modal chain length. OPS chain length increases with increasing concentration of WbdA, but the maximum length does not increase beyond the wild-type modal length, despite substantial increases in WbdA concentration. Its function is as follows. Mannosyltransferase involved in the biosynthesis of the repeat unit of the lipopolysaccharide (LPS) O-antigen region. Catalyzes the polymerization of a tetrasaccharide repeat unit containing two alpha-(1-&gt;3)- and two alpha-(1-&gt;2)-linked mannopyranose residues. Extension is terminated by the action of the chain terminator bifunctional methyltransferase/kinase WbdD. The chain is Serotype-specific mannosyltransferase WbdA from Escherichia coli.